Consider the following 149-residue polypeptide: Transcription antitermination protein NusB (149 aa).

The protein belongs to the NusB family.

Its function is as follows. Involved in transcription antitermination. Required for transcription of ribosomal RNA (rRNA) genes. Binds specifically to the boxA antiterminator sequence of the ribosomal RNA (rrn) operons. The protein is Transcription antitermination protein NusB of Sphingopyxis alaskensis (strain DSM 13593 / LMG 18877 / RB2256) (Sphingomonas alaskensis).